The sequence spans 66 residues: UPF0457 protein BA_2525/GBAA_2525/BAS2348 (66 aa).

Belongs to the UPF0457 family.

This Bacillus anthracis protein is UPF0457 protein BA_2525/GBAA_2525/BAS2348.